Reading from the N-terminus, the 249-residue chain is MARYDRAITVFSPDGHLFQVEYALEAVRKGNAAVGVRGTDNVVLGVEKKSTAKLQDTRSVRKIVNLDDHIALACAGLKADARVLINRARVECQSHRLTVEDPVTVEYITRYIAGLQQKYTQSGGVRPFGLSTLIVGFDPYTGSPSLYQTDPSGTFSAWKANATGRNSNSIREFLEKNFKETSGQETVKLAIRALLEVVESGGKNIEVAVMTKENGLRQLEEAEIDAIVAEIEAEKAAAEAAKKAPPKDT.

It belongs to the peptidase T1A family. The 26S proteasome consists of a 20S proteasome core and two 19S regulatory subunits. The 20S proteasome core is composed of 28 subunits that are arranged in four stacked rings, resulting in a barrel-shaped structure. The two end rings are each formed by seven alpha subunits, and the two central rings are each formed by seven beta subunits. The catalytic chamber with the active sites is on the inside of the barrel.

The protein localises to the cytoplasm. It is found in the nucleus. The proteasome is a multicatalytic proteinase complex which is characterized by its ability to cleave peptides with Arg, Phe, Tyr, Leu, and Glu adjacent to the leaving group at neutral or slightly basic pH. The proteasome has an ATP-dependent proteolytic activity. This Cicer arietinum (Chickpea) protein is Proteasome subunit alpha type-7 (PAD1).